A 458-amino-acid polypeptide reads, in one-letter code: Argininosuccinate lyase (458 aa).

The protein belongs to the lyase 1 family. Argininosuccinate lyase subfamily.

The protein resides in the cytoplasm. It carries out the reaction 2-(N(omega)-L-arginino)succinate = fumarate + L-arginine. The protein operates within amino-acid biosynthesis; L-arginine biosynthesis; L-arginine from L-ornithine and carbamoyl phosphate: step 3/3. In Bacillus velezensis (strain DSM 23117 / BGSC 10A6 / LMG 26770 / FZB42) (Bacillus amyloliquefaciens subsp. plantarum), this protein is Argininosuccinate lyase.